A 307-amino-acid chain; its full sequence is Alginate lyase (307 aa).

An N-terminal signal peptide occupies residues 1 to 20; it reads MLKSGVMVASLCLFSVPSRA.

It belongs to the polysaccharide lyase 7 family.

Its subcellular location is the secreted. It carries out the reaction Eliminative cleavage of alginate to give oligosaccharides with 4-deoxy-alpha-L-erythro-hex-4-enuronosyl groups at their non-reducing ends and beta-D-mannuronate at their reducing end.. In terms of biological role, degrades alginates that contain guluronic acid. The polypeptide is Alginate lyase (alyA) (Klebsiella pneumoniae).